An 826-amino-acid chain; its full sequence is Arsenite oxidase subunit AioA (826 aa).

3 residues coordinate [3Fe-4S] cluster: cysteine 22, cysteine 25, and cysteine 29. Substrate-binding residues include histidine 196, glutamate 204, arginine 419, and histidine 423.

Belongs to the prokaryotic molybdopterin-containing oxidoreductase family. Heterodimer consisting of a large and a small subunit. The cofactor is [3Fe-4S] cluster. Requires Mo-bis(molybdopterin guanine dinucleotide) as cofactor.

The catalysed reaction is 2 oxidized [azurin] + arsenite + H2O = 2 reduced [azurin] + arsenate + 3 H(+). Involved in the detoxification of arsenic. Oxidizes As(III)O3(3-) (arsenite) to the somewhat less toxic As(V)O4(3-) (arsenate). This chain is Arsenite oxidase subunit AioA (aioA), found in Herminiimonas arsenicoxydans.